The sequence spans 221 residues: Thiamine-phosphate synthase (221 aa).

4-amino-2-methyl-5-(diphosphooxymethyl)pyrimidine contacts are provided by residues 46 to 50 and asparagine 83; that span reads QFREK. Mg(2+) is bound by residues aspartate 84 and aspartate 103. Serine 122 lines the 4-amino-2-methyl-5-(diphosphooxymethyl)pyrimidine pocket. Position 149-151 (149-151) interacts with 2-[(2R,5Z)-2-carboxy-4-methylthiazol-5(2H)-ylidene]ethyl phosphate; that stretch reads TQS. Lysine 152 contacts 4-amino-2-methyl-5-(diphosphooxymethyl)pyrimidine. Residues glycine 181 and 201 to 202 each bind 2-[(2R,5Z)-2-carboxy-4-methylthiazol-5(2H)-ylidene]ethyl phosphate; that span reads IS.

It belongs to the thiamine-phosphate synthase family. Mg(2+) serves as cofactor.

The catalysed reaction is 2-[(2R,5Z)-2-carboxy-4-methylthiazol-5(2H)-ylidene]ethyl phosphate + 4-amino-2-methyl-5-(diphosphooxymethyl)pyrimidine + 2 H(+) = thiamine phosphate + CO2 + diphosphate. It carries out the reaction 2-(2-carboxy-4-methylthiazol-5-yl)ethyl phosphate + 4-amino-2-methyl-5-(diphosphooxymethyl)pyrimidine + 2 H(+) = thiamine phosphate + CO2 + diphosphate. The enzyme catalyses 4-methyl-5-(2-phosphooxyethyl)-thiazole + 4-amino-2-methyl-5-(diphosphooxymethyl)pyrimidine + H(+) = thiamine phosphate + diphosphate. The protein operates within cofactor biosynthesis; thiamine diphosphate biosynthesis; thiamine phosphate from 4-amino-2-methyl-5-diphosphomethylpyrimidine and 4-methyl-5-(2-phosphoethyl)-thiazole: step 1/1. Condenses 4-methyl-5-(beta-hydroxyethyl)thiazole monophosphate (THZ-P) and 2-methyl-4-amino-5-hydroxymethyl pyrimidine pyrophosphate (HMP-PP) to form thiamine monophosphate (TMP). This chain is Thiamine-phosphate synthase, found in Actinobacillus succinogenes (strain ATCC 55618 / DSM 22257 / CCUG 43843 / 130Z).